Consider the following 511-residue polypeptide: 2-isopropylmalate synthase (511 aa).

Residues Met1–Glu16 show a composition bias toward basic and acidic residues. Residues Met1–Met23 are disordered. A Pyruvate carboxyltransferase domain is found at Ile5–Thr268. Asp14, His203, His205, and Asn239 together coordinate Mn(2+). The interval Ala392–Lys511 is regulatory domain.

Belongs to the alpha-IPM synthase/homocitrate synthase family. LeuA type 1 subfamily. In terms of assembly, homodimer. Mn(2+) is required as a cofactor.

The protein localises to the cytoplasm. The catalysed reaction is 3-methyl-2-oxobutanoate + acetyl-CoA + H2O = (2S)-2-isopropylmalate + CoA + H(+). It participates in amino-acid biosynthesis; L-leucine biosynthesis; L-leucine from 3-methyl-2-oxobutanoate: step 1/4. Its function is as follows. Catalyzes the condensation of the acetyl group of acetyl-CoA with 3-methyl-2-oxobutanoate (2-ketoisovalerate) to form 3-carboxy-3-hydroxy-4-methylpentanoate (2-isopropylmalate). In Olsenella uli (strain ATCC 49627 / DSM 7084 / CCUG 31166 / CIP 109912 / JCM 12494 / LMG 11480 / NCIMB 702895 / VPI D76D-27C) (Lactobacillus uli), this protein is 2-isopropylmalate synthase.